Consider the following 484-residue polypeptide: Replication factor C large subunit (484 aa).

An ATP-binding site is contributed by G46–T53. Residues N463–A478 show a composition bias toward basic and acidic residues. Residues N463–F484 are disordered.

The protein belongs to the activator 1 small subunits family. RfcL subfamily. Heteromultimer composed of small subunits (RfcS) and large subunits (RfcL).

Part of the RFC clamp loader complex which loads the PCNA sliding clamp onto DNA. The polypeptide is Replication factor C large subunit (Methanococcus maripaludis (strain C6 / ATCC BAA-1332)).